The following is an 889-amino-acid chain: MGDLNKHTFLSRVFGSASNPLLNDDNNDIEFSINNLQDTFEEHQVESPPRAPHPINVNSEDESSSETESASNEDLLYDQKRELYQQVESELRQDDYDTVPESLMMERRRPHEGSTRTIGTKIPPSPAEPPIGPNITQWGEKARGIASRTLDNIPKTIAKGISFQLPANASSKLPPPPLSYRRETSVGGETEMAQNINEQRQLRGRLGLLSPMERALWLWSNVSNLDTFLEDVYGYYTGNGYRCIILSRVSDLLIIVFVVWLTSFMGNCVDYNQLMNGNATKYSDVVVDKCYSKISLSQKLFFLVLFAILVLRIKSFYSHFKDLKEIKNFYNLLLGVSDEELQTISWSTIVKKIKVLRDQNTNALISGNQNLRGDDLKSKKRLSAHDIANRLMRKENYMIAIFNKNVLAPALTIPFINHHFLTKTLEWNLKLCIFDFVFNTDGQLKQAVLSEHKRLALATEMRKRFRLAGILSIFLTPFLVIYFLLYFFLKFFYDIKTNPSLVGSREYSPYARWKLREFNELPHMFDKRLKMSRARATEYINQFPKEATNIILNFVAFVTGSLVTILVVLTVLGHENFLNFELTEGRTVLFYISTLGAVFTICKGSVSENDTVFDPEASLRYVAQFTHYLPNSWNGRFHTEEVKNEFCKLFNLRLILVLKEITSLIMLPYILYCRLPDVSEKVIDFFREFSVHVDGLGYVCTFAMFEFDSKDKPVRSQAANDDDDLKQEYYTADDDKMVKSYLYFLESYGNESVRKTGKEPAVDRISRRPGKKNLLRSAMMNNSMMDKSRGAQSTVRYPPQFRSPNLAESVYTKRQNIDLMEDTTAGLSTDTRNYLQTLNNSTLLGESFQHGFPVEDTTHHEEDADSEDDDEAGVLGLINQIYKHKEGVN.

Residues 1–248 (MGDLNKHTFL…NGYRCIILSR (248 aa)) are Cytoplasmic-facing. Disordered regions lie at residues 41–77 (EEHQVESPPRAPHPINVNSEDESSSETESASNEDLLY) and 108–132 (RRPHEGSTRTIGTKIPPSPAEPPIG). Pro residues predominate over residues 123–132 (PPSPAEPPIG). The helical transmembrane segment at 249 to 269 (VSDLLIIVFVVWLTSFMGNCV) threads the bilayer. The Lumenal portion of the chain corresponds to 270–299 (DYNQLMNGNATKYSDVVVDKCYSKISLSQK). Residues 300-320 (LFFLVLFAILVLRIKSFYSHF) form a helical membrane-spanning segment. At 321 to 395 (KDLKEIKNFY…DIANRLMRKE (75 aa)) the chain is on the cytoplasmic side. An intramembrane region is located at residue N396. The Cytoplasmic segment spans residues 397–468 (YMIAIFNKNV…TEMRKRFRLA (72 aa)). The chain crosses the membrane as a helical span at residues 469 to 489 (GILSIFLTPFLVIYFLLYFFL). Residues 490 to 549 (KFFYDIKTNPSLVGSREYSPYARWKLREFNELPHMFDKRLKMSRARATEYINQFPKEATN) are Lumenal-facing. Residues 550–570 (IILNFVAFVTGSLVTILVVLT) traverse the membrane as a helical segment. Residues 571 to 651 (VLGHENFLNF…VKNEFCKLFN (81 aa)) are Cytoplasmic-facing. An intramembrane segment occupies 652–672 (LRLILVLKEITSLIMLPYILY). Residues 673-889 (CRLPDVSEKV…QIYKHKEGVN (217 aa)) are Cytoplasmic-facing.

This sequence belongs to the ATG9 family. As to quaternary structure, homotrimer; forms a homotrimer with a central pore that forms a path between the two membrane leaflets. In terms of processing, phosphorylated by ATG1. ATG1 phosphorylation is required for preautophagosome elongation.

Its subcellular location is the preautophagosomal structure membrane. The protein localises to the cytoplasmic vesicle membrane. The protein resides in the golgi apparatus membrane. It is found in the endoplasmic reticulum membrane. It carries out the reaction a 1,2-diacyl-sn-glycero-3-phosphocholine(in) = a 1,2-diacyl-sn-glycero-3-phosphocholine(out). The enzyme catalyses a 1,2-diacyl-sn-glycero-3-phospho-L-serine(in) = a 1,2-diacyl-sn-glycero-3-phospho-L-serine(out). The catalysed reaction is a 1,2-diacyl-sn-glycero-3-phosphoethanolamine(in) = a 1,2-diacyl-sn-glycero-3-phosphoethanolamine(out). It catalyses the reaction a 1,2-diacyl-sn-glycero-3-phospho-(1D-myo-inositol-3-phosphate)(in) = a 1,2-diacyl-sn-glycero-3-phospho-(1D-myo-inositol-3-phosphate)(out). In terms of biological role, phospholipid scramblase involved in autophagy and cytoplasm to vacuole transport (Cvt) vesicle formation. Cycles between the preautophagosomal structure/phagophore assembly site (PAS) and the cytoplasmic vesicle pool and supplies membrane for the growing autophagosome. Lipid scramblase activity plays a key role in preautophagosomal structure/phagophore assembly by distributing the phospholipids that arrive through ATG2 from the cytoplasmic to the luminal leaflet of the bilayer, thereby driving autophagosomal membrane expansion. Required for mitophagy. Also involved in endoplasmic reticulum-specific autophagic process and is essential for the survival of cells subjected to severe ER stress. Different machineries are required for anterograde trafficking to the PAS during either the Cvt pathway or bulk autophagy and for retrograde trafficking. The protein is Autophagy-related protein 9 (ATG9) of Pichia angusta (Yeast).